A 54-amino-acid polypeptide reads, in one-letter code: Light-harvesting protein B-870 beta chain (54 aa).

At 1-20 the chain is on the cytoplasmic side; that stretch reads EVKQESLSGITEGEAKEFHK. 2 residues coordinate a bacteriochlorophyll: H19 and H37. The chain crosses the membrane as a helical span at residues 21-43; it reads IFTSSILVFFGVAAFAHLLVWIW. Residues 44–54 are Periplasmic-facing; that stretch reads RPWVPGPNGYS.

It belongs to the antenna complex beta subunit family. In terms of assembly, the core complex is formed by different alpha and beta chains, binding bacteriochlorophyll molecules, and arranged most probably in tetrameric structures disposed around the reaction center. The non-pigmented gamma chains may constitute additional components.

It is found in the cell inner membrane. Its function is as follows. Antenna complexes are light-harvesting systems, which transfer the excitation energy to the reaction centers. The polypeptide is Light-harvesting protein B-870 beta chain (Rhodospirillum rubrum).